Consider the following 236-residue polypeptide: 2-C-methyl-D-erythritol 4-phosphate cytidylyltransferase (236 aa).

It belongs to the IspD/TarI cytidylyltransferase family. IspD subfamily. In terms of assembly, homodimer.

The catalysed reaction is 2-C-methyl-D-erythritol 4-phosphate + CTP + H(+) = 4-CDP-2-C-methyl-D-erythritol + diphosphate. It participates in isoprenoid biosynthesis; isopentenyl diphosphate biosynthesis via DXP pathway; isopentenyl diphosphate from 1-deoxy-D-xylulose 5-phosphate: step 2/6. Catalyzes the formation of 4-diphosphocytidyl-2-C-methyl-D-erythritol from CTP and 2-C-methyl-D-erythritol 4-phosphate (MEP). This chain is 2-C-methyl-D-erythritol 4-phosphate cytidylyltransferase, found in Shigella flexneri serotype 5b (strain 8401).